The primary structure comprises 618 residues: tRNA endonuclease vms-1 (618 aa).

The segment at 59-85 adopts a C2H2-type zinc-finger fold; it reads DQCTTCNCPVDFGDRAVLLEHYQSLFH. In terms of domain architecture, VLRF1 spans 170–311; it reads RPFDCAIFLW…SDCWQRLQQV (142 aa). Glutamine 213 is a catalytic residue. ANK repeat units lie at residues 437-466 and 470-496; these read NRST…CDSS and GAGL…VKNE. A disordered region spans residues 502-539; that stretch reads ARTHIPEPKKKVELTEEQEREQAERKKEKKARQKEKEK. Residues 505 to 515 are compositionally biased toward basic and acidic residues; the sequence is HIPEPKKKVEL. The stretch at 510–557 forms a coiled coil; that stretch reads KKKVELTEEQEREQAERKKEKKARQKEKEKLKKEIAKRDVEEMEERQK.

The protein belongs to the ANKZF1/VMS1 family. As to expression, in larval stages and in adults, expressed in intestinal cells, specific neurons in the head and the tail, and in the ventral nerve cord.

The protein resides in the cytoplasm. It localises to the mitochondrion. Endonuclease that cleaves polypeptidyl-tRNAs downstream of the ribosome-associated quality control (RQC) pathway to release incompletely synthesized polypeptides for degradation. The RQC pathway disassembles aberrantly stalled translation complexes to recycle or degrade the constituent parts. Dispensable for viability and growth but is required for protection against oxidative stress and for wild-type life span. The chain is tRNA endonuclease vms-1 (vms-1) from Caenorhabditis elegans.